The chain runs to 194 residues: ATP-dependent Clp protease proteolytic subunit (194 aa).

Residue S98 is the Nucleophile of the active site. Residue H123 is part of the active site.

The protein belongs to the peptidase S14 family. Fourteen ClpP subunits assemble into 2 heptameric rings which stack back to back to give a disk-like structure with a central cavity, resembling the structure of eukaryotic proteasomes.

The protein localises to the cytoplasm. It catalyses the reaction Hydrolysis of proteins to small peptides in the presence of ATP and magnesium. alpha-casein is the usual test substrate. In the absence of ATP, only oligopeptides shorter than five residues are hydrolyzed (such as succinyl-Leu-Tyr-|-NHMec, and Leu-Tyr-Leu-|-Tyr-Trp, in which cleavage of the -Tyr-|-Leu- and -Tyr-|-Trp bonds also occurs).. Cleaves peptides in various proteins in a process that requires ATP hydrolysis. Has a chymotrypsin-like activity. Plays a major role in the degradation of misfolded proteins. This Wigglesworthia glossinidia brevipalpis protein is ATP-dependent Clp protease proteolytic subunit.